The sequence spans 706 residues: MWLFALLVTLFYGVEGSIYLPQKLYGEVTSPLYPKPYPSDLETTTVITVPMGYRVKLVFWQFDVEPSEGCLYDYVKISADKQTLGRFCGQLDSPLGNPPGSKEFMSQGNKMLLTFHTDFSNEENGTIMFYKGFLAYYQAVDLDECASQPNSVEEGLQPRCQHLCHNYVGGYFCSCHPGYELQKDGQSCQAECSSELYTEPSGYVSSLEYPQPYPPDLRCNYSIRVERGLTVHLKFLDPFEIDDHQQVHCPYDQLQIYANGKNLGEFCGKQRPPDLDTSSNAVDLLFFTDESGDSRGWKLHYTTETIKCPQPKALDEFTIIQDPQPQYQFRDYFTVTCKQGYQLMEGNQALLSFTAVCQHDGTWHRAMPRCKIKNCGQPQSLSNGDFRYITTKGVTTYEASIQYHCHEPYYKMLTRAGSSESMRGIYTCTAQGIWKNEEEGEKMPRCLPVCGKPVNPVTQKERIIGGQPARPGNFPWQAFTTIYGPGGGALLGDRWILTAAHTIYPKYPNKGKNTNPRTLVFLGHTNMEQIQKLGHHPVRRVIIHPDYRQEEPDNFEGDIALLELENSVTLGPELLPICLPDNETFYGQGLMGYVSGFGTTGNRIPFHLRFVRLPVADREACQRWLWTKKDTSPFSQNMFCSGDPAVQQDACQGDSGGVFAVRDRNRDIWVATGIVSWGIGCGEGYGFYTKVLNYVDWIKKEMGDEN.

An N-terminal signal peptide occupies residues 1 to 16; sequence MWLFALLVTLFYGVEG. One can recognise a CUB 1 domain in the interval 17-140; the sequence is SIYLPQKLYG…KGFLAYYQAV (124 aa). Ca(2+)-binding residues include glutamate 65, aspartate 73, and aspartate 118. The cysteines at positions 70 and 88 are disulfide-linked. Asparagine 124 is a glycosylation site (N-linked (GlcNAc...) asparagine). 3 residues coordinate Ca(2+): aspartate 141, leucine 142, and glutamate 144. One can recognise an EGF-like; calcium-binding domain in the interval 141-189; that stretch reads DLDECASQPNSVEEGLQPRCQHLCHNYVGGYFCSCHPGYELQKDGQSCQ. Cystine bridges form between cysteine 145-cysteine 164, cysteine 160-cysteine 173, cysteine 175-cysteine 188, and cysteine 192-cysteine 219. The Ca(2+) site is built by asparagine 166, tyrosine 167, and glycine 170. Position 166 is a (3R)-3-hydroxyasparagine (asparagine 166). The region spanning 192–304 is the CUB 2 domain; sequence CSSELYTEPS…RGWKLHYTTE (113 aa). At serine 205 the chain carries Phosphoserine; by CK2. Asparagine 220 is a glycosylation site (N-linked (GlcNAc...) asparagine). Ca(2+) contacts are provided by aspartate 242, aspartate 252, aspartate 289, and aspartate 293. Cysteine 249 and cysteine 267 are oxidised to a cystine. 2 Sushi domains span residues 306–372 and 373–448; these read IKCP…RCKI and KNCG…RCLP. Disulfide bonds link cysteine 308-cysteine 357, cysteine 337-cysteine 370, cysteine 375-cysteine 428, cysteine 405-cysteine 446, and cysteine 450-cysteine 578. In terms of domain architecture, Peptidase S1 spans 463 to 703; it reads IIGGQPARPG…YVDWIKKEMG (241 aa). Catalysis depends on charge relay system residues histidine 501 and aspartate 558. Asparagine 582 carries N-linked (GlcNAc...) asparagine glycosylation. Disulfide bonds link cysteine 621–cysteine 640 and cysteine 651–cysteine 681. Serine 655 serves as the catalytic Charge relay system.

This sequence belongs to the peptidase S1 family. As to quaternary structure, core component of the complement C1 complex, a calcium-dependent complex composed of 1 molecule of the C1Q subcomplex, 2 molecules of C1R and 2 molecules of C1S. The C1Q subcomplex is composed 18 subunits: 3 chains of C1QA, C1QB, and C1QC trimerize to form 6 collagen-like triple helices connected to six globular ligand-recognition modules. Within the C1 complex, C1R is a dimer of identical chains, each of which is activated by cleavage into two chains, heavy and light, connected by disulfide bonds. Cleaved and activated by autocatalytic processing to generate Complement C1r subcomponent heavy and light chains that are connected by disulfide bonds. Post-translationally, the iron and 2-oxoglutarate dependent 3-hydroxylation of aspartate and asparagine is (R) stereospecific within EGF domains.

The protein resides in the secreted. It localises to the cell surface. It catalyses the reaction Selective cleavage of Lys(or Arg)-|-Ile bond in complement subcomponent C1s to form the active form of C1s (EC 3.4.21.42).. Activated by the C1Q subcomplex of the C1 complex following C1Q binding to immunoglobulins (IgG or IgM) complexed with antigens to form antigen-antibody complexes on the surface of pathogens. Immunoglobulin-binding promotes autoactivation of C1R, which results in the cleavage of the Arg-Ile bond in the catalytic domain. Serine protease component of the complement C1 complex, a multiprotein complex that initiates the classical pathway of the complement system, a cascade of proteins that leads to phagocytosis and breakdown of pathogens and signaling that strengthens the adaptive immune system. C1R catalyzes the first enzymatic step in the classical complement pathway: it is activated by the C1Q subcomplex of the C1 complex, which associates with IgG or IgM immunoglobulins complexed with antigens to form antigen-antibody complexes on the surface of pathogens. Immunoglobulin-binding promotes the autocatalytic cleavage and activation of C1R. Activated C1R then cleaves and activates C1S, the second protease of the classical complement pathway. It is unclear if C1R activates C1S within single, strained C1 complexes or between neighboring C1 complexes on surfaces. This is Complement C1r-B subcomponent (C1rb) from Mus musculus (Mouse).